Consider the following 413-residue polypeptide: O-methyltransferase kntB (413 aa).

Residues 255–256, aspartate 280, 302–303, and arginine 319 each bind S-adenosyl-L-methionine; these read GG and NF. Histidine 322 serves as the catalytic Proton acceptor.

This sequence belongs to the class I-like SAM-binding methyltransferase superfamily. Cation-independent O-methyltransferase family. S-adenosyl-L-methionine is required as a cofactor.

It functions in the pathway secondary metabolite biosynthesis. In terms of biological role, non-reducing polyketide synthase; part of the gene cluster that mediates the biosynthesis of the bicoumarin kotanin. The non-reducing polyketide synthase ktnS first catalyzes the formation of the pentaketidic 4,7-dihydroxy-5-methylcoumarin from acetyl coenzyme A and 4 malonyl coenzyme A molecules. Further O-methylation by ktnB leads to the formation of 7-demethylsiderin. Then, an oxidative phenol coupling catalyzed by the cytochrome P450 monooxygenase ktnC forms the 8,8'-dimer P-orlandin via dimerization the monomeric precursor, 7-demethylsiderin. P-orlandin is subsequently O-methylated in a stepwise fashion to demethylkotanin and kotanin. The chain is O-methyltransferase kntB from Aspergillus niger (strain ATCC MYA-4892 / CBS 513.88 / FGSC A1513).